A 631-amino-acid chain; its full sequence is MTKLLSYINTSEDLKHLSTEDLNKLAEELREFLISSISITGGHLAPNLGVVELTLAIHKVFSPIQDKIVWDVGHQSYIHKILTGRKEQFSTLRQFGGLSGFPKPEESRYDAFGTGHSSTSISAALGMAKARDLQGSNEEVLAVIGDGAMTGGMAFEAMNHAGHEQANMTVILNDNEMSIGTNVGALSSYLSRLRTDPKYHRIKEDVEFLLKRIPAIGGKMMKSVERVKDSMKYLMVSGMLFEELGFTYIGPIDGHNIPQLMEVLNNAKDKNGPVLVHVITKKGKGYEPAEKFPDKFHGTGPFEIETGNAPKKAETAPSYSKVFGDTISEIARKNESVVAITAAMKDGTGLTNFAREFPERFFDVGIAEQHAITFAAGLARKGFKPVVAIYSTFLQRAYDQIIHDVCMQDNPVIFAIDRAGIVGGDGETHQGLYDLSYLRSIPNLIVMAPKDEAELQRMLNTAVNINKPVAIRYPRGKGEGVTLWENMTPIPLYKGETIREGSQVAMIGVGKMVPDMLEVADMLKKEGIEPTVFNARFVKPLDESSILEIAQKHEYIYTFEENTELGGFGSQVLECLSKHGLAHKLIDRFCLPDEYIPHGDRSKVLSQYSLHSQELINKILNRLRGEQIEQG.

Thiamine diphosphate contacts are provided by residues H74 and 115–117 (GHS). D146 serves as a coordination point for Mg(2+). Thiamine diphosphate is bound by residues 147–148 (GA), N175, Y286, and E368. N175 is a binding site for Mg(2+).

The protein belongs to the transketolase family. DXPS subfamily. In terms of assembly, homodimer. Mg(2+) serves as cofactor. The cofactor is thiamine diphosphate.

It catalyses the reaction D-glyceraldehyde 3-phosphate + pyruvate + H(+) = 1-deoxy-D-xylulose 5-phosphate + CO2. It participates in metabolic intermediate biosynthesis; 1-deoxy-D-xylulose 5-phosphate biosynthesis; 1-deoxy-D-xylulose 5-phosphate from D-glyceraldehyde 3-phosphate and pyruvate: step 1/1. In terms of biological role, catalyzes the acyloin condensation reaction between C atoms 2 and 3 of pyruvate and glyceraldehyde 3-phosphate to yield 1-deoxy-D-xylulose-5-phosphate (DXP). The chain is 1-deoxy-D-xylulose-5-phosphate synthase from Natranaerobius thermophilus (strain ATCC BAA-1301 / DSM 18059 / JW/NM-WN-LF).